The primary structure comprises 1107 residues: Probable chromatin-remodeling complex ATPase chain (1107 aa).

Disordered regions lie at residues 1–124 (MAKP…KREK) and 177–217 (GNQS…GSGG). 4 stretches are compositionally biased toward acidic residues: residues 8–25 (DEEE…EEQS), 33–43 (GEEEDEEEEEA), 53–65 (GGEE…EEIE), and 89–114 (EGDE…DEAE). The stretch at 121 to 147 (KREKARLKEMQKLKKQKIQEILDTQNA) forms a coiled coil. Over residues 183-193 (KKPRGRGRHAS) the composition is skewed to basic residues. Acidic residues predominate over residues 197-211 (EEEEDEEYLKEEEDA). Residues 243–408 (IRLYENGING…WSLLNFLLPE (166 aa)) form the Helicase ATP-binding domain. Position 256–263 (256–263 (DEMGLGKT)) interacts with ATP. A DEAH box motif is present at residues 359–362 (DEAH). A Helicase C-terminal domain is found at 536-687 (LLDKLLPKLK…ALVIQQGRLA (152 aa)). 2 SANT domains span residues 877-929 (EGFA…ERYK) and 978-1039 (QNKG…DTLI). Residues 1029–1067 (QELARRCDTLIRLVEKENQEYDEQERQARKDKRMAKNMT) are a coiled coil. The interval 1049–1107 (YDEQERQARKDKRMAKNMTPTKRSALRVSEGETTPSNSFKRRRQSLMDDYVGSGRRKRG) is disordered.

The protein belongs to the SNF2/RAD54 helicase family. ISWI subfamily.

The protein localises to the nucleus. In terms of biological role, possesses intrinsic ATP-dependent nucleosome-remodeling activity. Constitutes the catalytic subunit of several complexes capable of forming ordered nucleosome arrays on chromatin in vitro. This Oryza sativa subsp. japonica (Rice) protein is Probable chromatin-remodeling complex ATPase chain.